A 24-amino-acid chain; its full sequence is Positive regulator of RepFIC repA1 expression (24 aa).

This chain is Positive regulator of RepFIC repA1 expression (repL), found in Escherichia coli.